The primary structure comprises 207 residues: LexA repressor (207 aa).

The H-T-H motif DNA-binding region spans valine 28–alanine 48. Active-site for autocatalytic cleavage activity residues include serine 129 and lysine 167.

It belongs to the peptidase S24 family. Homodimer.

It catalyses the reaction Hydrolysis of Ala-|-Gly bond in repressor LexA.. In terms of biological role, represses a number of genes involved in the response to DNA damage (SOS response), including recA and lexA. In the presence of single-stranded DNA, RecA interacts with LexA causing an autocatalytic cleavage which disrupts the DNA-binding part of LexA, leading to derepression of the SOS regulon and eventually DNA repair. This is LexA repressor from Geobacillus thermodenitrificans (strain NG80-2).